Reading from the N-terminus, the 337-residue chain is o-succinylbenzoate synthase (337 aa).

Lys142 serves as the catalytic Proton donor. Residues Asp170, Glu199, and Asp222 each contribute to the Mg(2+) site. Lys248 serves as the catalytic Proton acceptor.

It belongs to the mandelate racemase/muconate lactonizing enzyme family. MenC type 1 subfamily. The cofactor is a divalent metal cation.

It carries out the reaction (1R,6R)-6-hydroxy-2-succinyl-cyclohexa-2,4-diene-1-carboxylate = 2-succinylbenzoate + H2O. It functions in the pathway quinol/quinone metabolism; 1,4-dihydroxy-2-naphthoate biosynthesis; 1,4-dihydroxy-2-naphthoate from chorismate: step 4/7. The protein operates within quinol/quinone metabolism; menaquinone biosynthesis. Its function is as follows. Converts 2-succinyl-6-hydroxy-2,4-cyclohexadiene-1-carboxylate (SHCHC) to 2-succinylbenzoate (OSB). The protein is o-succinylbenzoate synthase of Pasteurella multocida (strain Pm70).